A 385-amino-acid polypeptide reads, in one-letter code: Probable tRNA sulfurtransferase (385 aa).

Residues 57 to 161 (NESIKRLSNV…NKNAYVWSNK (105 aa)) enclose the THUMP domain. Residues 181-182 (ML), 206-207 (YY), Arg-263, Gly-285, and Gln-294 contribute to the ATP site.

This sequence belongs to the ThiI family.

Its subcellular location is the cytoplasm. It catalyses the reaction [ThiI sulfur-carrier protein]-S-sulfanyl-L-cysteine + a uridine in tRNA + 2 reduced [2Fe-2S]-[ferredoxin] + ATP + H(+) = [ThiI sulfur-carrier protein]-L-cysteine + a 4-thiouridine in tRNA + 2 oxidized [2Fe-2S]-[ferredoxin] + AMP + diphosphate. The enzyme catalyses [ThiS sulfur-carrier protein]-C-terminal Gly-Gly-AMP + S-sulfanyl-L-cysteinyl-[cysteine desulfurase] + AH2 = [ThiS sulfur-carrier protein]-C-terminal-Gly-aminoethanethioate + L-cysteinyl-[cysteine desulfurase] + A + AMP + 2 H(+). Its pathway is cofactor biosynthesis; thiamine diphosphate biosynthesis. Catalyzes the ATP-dependent transfer of a sulfur to tRNA to produce 4-thiouridine in position 8 of tRNAs, which functions as a near-UV photosensor. Also catalyzes the transfer of sulfur to the sulfur carrier protein ThiS, forming ThiS-thiocarboxylate. This is a step in the synthesis of thiazole, in the thiamine biosynthesis pathway. The sulfur is donated as persulfide by IscS. The polypeptide is Probable tRNA sulfurtransferase (Clostridium botulinum (strain Alaska E43 / Type E3)).